Reading from the N-terminus, the 749-residue chain is Catalase-peroxidase 2 (749 aa).

A signal peptide spans 1 to 27 (MFKRTIPLFAAFTLAISPSVFPNYAYA). The tryptophyl-tyrosyl-methioninium (Trp-Tyr) (with M-255) cross-link spans 107 to 229 (WHAAGTYRIY…LAATVMGLIY (123 aa)). Residue histidine 108 is the Proton acceptor of the active site. Residues 229–255 (YVNPEGPNGVPDPLAAAEKIRETFGRM) constitute a cross-link (tryptophyl-tyrosyl-methioninium (Tyr-Met) (with W-107)). Histidine 270 provides a ligand contact to heme b.

It belongs to the peroxidase family. Peroxidase/catalase subfamily. Homodimer or homotetramer. Heme b is required as a cofactor. Formation of the three residue Trp-Tyr-Met cross-link is important for the catalase, but not the peroxidase activity of the enzyme.

It carries out the reaction H2O2 + AH2 = A + 2 H2O. The enzyme catalyses 2 H2O2 = O2 + 2 H2O. Functionally, bifunctional enzyme with both catalase and broad-spectrum peroxidase activity. The chain is Catalase-peroxidase 2 from Legionella pneumophila (strain Paris).